The chain runs to 153 residues: Ribosome maturation factor RimP (153 aa).

The protein belongs to the RimP family.

The protein localises to the cytoplasm. Required for maturation of 30S ribosomal subunits. The chain is Ribosome maturation factor RimP from Pelotomaculum thermopropionicum (strain DSM 13744 / JCM 10971 / SI).